Consider the following 366-residue polypeptide: NADH-quinone oxidoreductase subunit D (366 aa).

Belongs to the complex I 49 kDa subunit family. As to quaternary structure, NDH-1 is composed of 14 different subunits. Subunits NuoB, C, D, E, F, and G constitute the peripheral sector of the complex.

The protein resides in the cell membrane. The catalysed reaction is a quinone + NADH + 5 H(+)(in) = a quinol + NAD(+) + 4 H(+)(out). Its function is as follows. NDH-1 shuttles electrons from NADH, via FMN and iron-sulfur (Fe-S) centers, to quinones in the respiratory chain. The immediate electron acceptor for the enzyme in this species is believed to be a menaquinone. Couples the redox reaction to proton translocation (for every two electrons transferred, four hydrogen ions are translocated across the cytoplasmic membrane), and thus conserves the redox energy in a proton gradient. In Bacillus anthracis, this protein is NADH-quinone oxidoreductase subunit D.